Consider the following 119-residue polypeptide: MIARRNPEPLRFLPDEARSLPPPKLTDPRLLYLGFLGYCSGLIDNLIRRRPIATAGLHRQLLYITAFFFAGYYLVKRENYLYAVRDREMFGYMKLHPEEFPEEEKKTYGEIFEKFHPVH.

Residues Gly-56–Val-75 traverse the membrane as a helical segment.

The protein belongs to the complex I NDUFC2 subunit family. As to quaternary structure, complex I is composed of 45 different subunits. Interacts with TMEM242.

The protein localises to the mitochondrion inner membrane. In terms of biological role, accessory subunit of the mitochondrial membrane respiratory chain NADH dehydrogenase (Complex I), that is believed not to be involved in catalysis but required for the complex assembly. Complex I functions in the transfer of electrons from NADH to the respiratory chain. The immediate electron acceptor for the enzyme is believed to be ubiquinone. The chain is NADH dehydrogenase [ubiquinone] 1 subunit C2 from Pongo pygmaeus (Bornean orangutan).